We begin with the raw amino-acid sequence, 460 residues long: Flavin-containing monooxygenase FMO GS-OX-like 9 (460 aa).

20–25 (GAGPAG) contacts FAD. 222-227 (GNSMSG) provides a ligand contact to NADP(+).

It belongs to the FMO family. It depends on FAD as a cofactor.

Catalyzes the conversion of methylthioalkyl glucosinolates of any chain length into methylsulfinylalkyl glucosinolates. The protein is Flavin-containing monooxygenase FMO GS-OX-like 9 of Arabidopsis thaliana (Mouse-ear cress).